The following is an 828-amino-acid chain: MTEAIINEGSPLGYSQGYSEDIDAIRQREYPMLSDTTYLDHAGTTLYAKSLIDSFSRDLTTNLFGNPHSLSASSQRTTQRVDDIRLRALRFFNADPEHFDLVFVANATSAIKLVADALRDSAHGFWYGYHVDAHTSLVGARELAQAGSRCFTTDEEVEAWIAQLDADRTGAAQLFAFPAQSNMNGRRLPLRWCGRIRDRTKETATTYTLLDAASLVATSPLDLSDVSAASDFTVLSFYKIFGFPDLGALIVRKSAGHIFAQRRFFGGGTVDMVLTQDTQWHAKKRSVHEILEDGTLPFHNIIALDSALDTHARLYGSMGNVSTHTRFLARTLYDRLAALRHFNGERVVHFYMGRSPDFADASAQGPILAFNLRSSQGGWIGKSEVERLASVKSLQIRSGTLCNPGGTASQLGWSGADMLRHFSAGLRCGDDHDVMDGRPTGILRVSLGAMSNLRDVEAFVAFVEEFYVEKTPNVCSVVPSAADDSLQAGFYVESLAVYPIKSCGAFKVPDGQRWEIRREGLAWDREWCLVHQGTGAALNQKRYPRMALIRPHIDLARGVLRVVCGEASSEQKTLEISLRREDASLVTTSLCQNAAKPSTVCGDQVVVQVYSSTAVSSFFSTFLDVPCTLARFPPQSTTRYTRRSLHSRSSTAALRRQRPVEESSMPGSFPSDTPLSRTPEPPPILLANESPILLISRSSVNRLNETIKASAKKAVAADVFRANIVVAENLPHQLANTERPYIEDRWESFTVGPDRLQFDVLGSCQRCQMVCIDQCSGERRDEPFSTLAKTRKVGSQIVFGRHAAVADGVDGISRTVMVGDVVRPWYPE.

Residue lysine 239 is modified to N6-(pyridoxal phosphate)lysine. The active site involves cysteine 402. The segment at 638 to 682 (TRYTRRSLHSRSSTAALRRQRPVEESSMPGSFPSDTPLSRTPEPP) is disordered. Residues 652-825 (AALRRQRPVE…VMVGDVVRPW (174 aa)) form the MOSC domain.

Belongs to the class-V pyridoxal-phosphate-dependent aminotransferase family. MOCOS subfamily. Pyridoxal 5'-phosphate serves as cofactor.

The enzyme catalyses Mo-molybdopterin + L-cysteine + AH2 = thio-Mo-molybdopterin + L-alanine + A + H2O. Functionally, sulfurates the molybdenum cofactor. Sulfation of molybdenum is essential for xanthine dehydrogenase (XDH) and aldehyde oxidase (ADO) enzymes in which molybdenum cofactor is liganded by 1 oxygen and 1 sulfur atom in active form. The chain is Molybdenum cofactor sulfurase from Aspergillus terreus (strain NIH 2624 / FGSC A1156).